Consider the following 312-residue polypeptide: 4-diphosphocytidyl-2-C-methyl-D-erythritol kinase (312 aa).

Residue Lys18 is part of the active site. 104–114 (PIAGGMGGGSA) provides a ligand contact to ATP. Asp146 is an active-site residue.

Belongs to the GHMP kinase family. IspE subfamily.

It carries out the reaction 4-CDP-2-C-methyl-D-erythritol + ATP = 4-CDP-2-C-methyl-D-erythritol 2-phosphate + ADP + H(+). The protein operates within isoprenoid biosynthesis; isopentenyl diphosphate biosynthesis via DXP pathway; isopentenyl diphosphate from 1-deoxy-D-xylulose 5-phosphate: step 3/6. Functionally, catalyzes the phosphorylation of the position 2 hydroxy group of 4-diphosphocytidyl-2C-methyl-D-erythritol. The chain is 4-diphosphocytidyl-2-C-methyl-D-erythritol kinase from Clavibacter michiganensis subsp. michiganensis (strain NCPPB 382).